A 1034-amino-acid chain; its full sequence is Potassium-transporting ATPase alpha chain 1 (1034 aa).

The Cytoplasmic segment spans residues 2–97 (GKAENYELYQ…NALRPPRGTP (96 aa)). Residues tyrosine 7 and tyrosine 10 each carry the phosphotyrosine modification. The segment at 13-40 (ELGPGPSGDMAAKMSKKKAGRGGGKRKE) is disordered. Positions 26–39 (MSKKKAGRGGGKRK) are enriched in basic residues. Serine 27 is subject to Phosphoserine; by PKA and PKC. Residues 98–118 (EYVKFARQLAGGLQCLMWVAA) form a helical membrane-spanning segment. The Lumenal portion of the chain corresponds to 119–141 (AICLIAFAIQASEGDLTTDDNLY). A helical transmembrane segment spans residues 142 to 162 (LALALIAVVVVTGCFGYYQEF). At 163–298 (KSTNIIASFK…NEKTPIAIEI (136 aa)) the chain is on the cytoplasmic side. The disordered stretch occupies residues 222–244 (KVDNSSLTGESEPQTRSPECTHE). Polar residues predominate over residues 225–239 (NSSLTGESEPQTRSP). Residues 299-318 (EHFVDIIAGLAILFGATFFI) form a helical membrane-spanning segment. Over 319 to 330 (VAMCIGYTFLRA) the chain is Lumenal. The helical transmembrane segment at 331–348 (MVFFMAIVVAYVPEGLLA) threads the bilayer. Residues valine 339, alanine 340, valine 342, and glutamate 344 each coordinate K(+). At 349–782 (TVTVCLSLTA…EQGRLIFDNL (434 aa)) the chain is on the cytoplasmic side. Residue aspartate 386 is the 4-aspartylphosphate intermediate of the active site. Residues aspartate 386 and threonine 388 each contribute to the Mg(2+) site. A phosphoserine mark is found at serine 462 and serine 600. Mg(2+)-binding residues include aspartate 727 and aspartate 731. The chain crosses the membrane as a helical span at residues 783 to 802 (KKSIAYTLTKNIPELTPYLI). A K(+)-binding site is contributed by glutamate 796. Over 803–812 (YITVSVPLPL) the chain is Lumenal. The helical transmembrane segment at 813-833 (GCITILFIELCTDIFPSVSLA) threads the bilayer. Glutamate 821 lines the K(+) pocket. Over 834–853 (YEKAESDIMHLRPRNPKRDR) the chain is Cytoplasmic. Phosphoserine is present on serine 839. A helical membrane pass occupies residues 854–876 (LVNEPLAAYSYFQIGAIQSFAGF). Residues 877 to 928 (TDYFTAMAQEGWFPLLCVGLRPQWENHHLQDLQDSYGQEWTFGQRLYQQYTC) are Lumenal-facing. A helical transmembrane segment spans residues 929-948 (YTVFFISIEMCQIADVLIRK). Topologically, residues 949–962 (TRRLSAFQQGFFRN) are cytoplasmic. Residue serine 953 is modified to Phosphoserine; by PKA. Residues 963–981 (RILVIAIVFQVCIGCFLCY) form a helical membrane-spanning segment. The Lumenal segment spans residues 982 to 996 (CPGMPNIFNFMPIRF). The chain crosses the membrane as a helical span at residues 997–1017 (QWWLVPMPFGLLIFVYDEIRK). Residues 1018-1034 (LGVRCCPGSWWDQELYY) lie on the Cytoplasmic side of the membrane.

It belongs to the cation transport ATPase (P-type) (TC 3.A.3) family. Type IIC subfamily. In terms of assembly, the gastric H(+)/K(+) ATPase pump is composed of the catalytic alpha subunit ATP4A and the regulatory beta subunit ATP4B. Interacts (via the P-domain) with ATP4B (via N-terminus); this interaction stabilizes the lumenal-open E2 conformation state and prevents the reverse reaction of the transport cycle.

It localises to the apical cell membrane. The protein localises to the cell membrane. It catalyses the reaction K(+)(out) + ATP + H2O + H(+)(in) = K(+)(in) + ADP + phosphate + 2 H(+)(out). Down-regulated by K(+)-competitive acid blockers (P-CABs) such as vonoprazan. In terms of biological role, the catalytic subunit of the gastric H(+)/K(+) ATPase pump which transports H(+) ions in exchange for K(+) ions across the apical membrane of parietal cells. Uses ATP as an energy source to pump H(+) ions to the gastric lumen while transporting K(+) ion from the lumen into the cell. Remarkably generates a million-fold proton gradient across the gastric parietal cell membrane, acidifying the gastric juice down to pH 1. Within a transport cycle, the transfer of a H(+) ion across the membrane is coupled to ATP hydrolysis and is associated with a transient phosphorylation that shifts the pump conformation from inward-facing (E1) to outward-facing state (E2). The release of the H(+) ion in the stomach lumen is followed by binding of K(+) ion converting the pump conformation back to the E1 state. The polypeptide is Potassium-transporting ATPase alpha chain 1 (ATP4A) (Sus scrofa (Pig)).